A 603-amino-acid polypeptide reads, in one-letter code: Polypeptide N-acetylgalactosaminyltransferase 10 (603 aa).

At methionine 1 to alanine 11 the chain is on the cytoplasmic side. Residues valine 12–tyrosine 31 traverse the membrane as a helical; Signal-anchor for type II membrane protein segment. Residues arginine 32–asparagine 603 are Lumenal-facing. 2 N-linked (GlcNAc...) asparagine glycosylation sites follow: asparagine 124 and asparagine 146. Intrachain disulfides connect cysteine 135/cysteine 365, cysteine 356/cysteine 432, cysteine 471/cysteine 488, cysteine 523/cysteine 538, and cysteine 563/cysteine 578. The tract at residues leucine 144–arginine 253 is catalytic subdomain A. The substrate site is built by aspartate 185 and arginine 214. Aspartate 237 serves as a coordination point for Mn(2+). Serine 238 provides a ligand contact to substrate. Mn(2+) is bound at residue histidine 239. The catalytic subdomain B stretch occupies residues proline 311–arginine 373. Residue tryptophan 342 participates in substrate binding. Histidine 370 contacts Mn(2+). The substrate site is built by arginine 373 and tyrosine 378. The segment at arginine 373–valine 384 is flexible loop. A Ricin B-type lectin domain is found at alanine 458–glutamate 590. Asparagine 593 is a glycosylation site (N-linked (GlcNAc...) asparagine).

Belongs to the glycosyltransferase 2 family. GalNAc-T subfamily. It depends on Mn(2+) as a cofactor. In terms of tissue distribution, expressed at higher level than GALNT9. In the developing hindbrain region of 14.5 dpc embryos it accumulates in the rapidly dividing, undifferentiated ventricular zone adjacent to the pons. It also accumulates in the regions immediately rostral and caudal to the dorsal rhombic lips differentiating into the cerebellum. Not expressed in the developing choroid plexus.

It is found in the golgi apparatus membrane. The catalysed reaction is L-seryl-[protein] + UDP-N-acetyl-alpha-D-galactosamine = a 3-O-[N-acetyl-alpha-D-galactosaminyl]-L-seryl-[protein] + UDP + H(+). The enzyme catalyses L-threonyl-[protein] + UDP-N-acetyl-alpha-D-galactosamine = a 3-O-[N-acetyl-alpha-D-galactosaminyl]-L-threonyl-[protein] + UDP + H(+). It functions in the pathway protein modification; protein glycosylation. In terms of biological role, catalyzes the initial reaction in O-linked oligosaccharide biosynthesis, the transfer of an N-acetyl-D-galactosamine residue to a serine or threonine residue on the protein receptor. Has activity toward Muc5Ac and EA2 peptide substrates. This is Polypeptide N-acetylgalactosaminyltransferase 10 (Galnt10) from Mus musculus (Mouse).